A 373-amino-acid chain; its full sequence is Dual-specificity RNA methyltransferase RlmN (373 aa).

Residue glutamate 94 is the Proton acceptor of the active site. Positions 100–339 (EDDRATLCVS…VIVRKTRGDD (240 aa)) constitute a Radical SAM core domain. Residues cysteine 107 and cysteine 344 are joined by a disulfide bond. Residues cysteine 114, cysteine 118, and cysteine 121 each coordinate [4Fe-4S] cluster. S-adenosyl-L-methionine contacts are provided by residues 168-169 (GE), serine 200, 222-224 (SIH), and asparagine 301. Residue cysteine 344 is the S-methylcysteine intermediate of the active site.

The protein belongs to the radical SAM superfamily. RlmN family. Requires [4Fe-4S] cluster as cofactor.

Its subcellular location is the cytoplasm. The catalysed reaction is adenosine(2503) in 23S rRNA + 2 reduced [2Fe-2S]-[ferredoxin] + 2 S-adenosyl-L-methionine = 2-methyladenosine(2503) in 23S rRNA + 5'-deoxyadenosine + L-methionine + 2 oxidized [2Fe-2S]-[ferredoxin] + S-adenosyl-L-homocysteine. It carries out the reaction adenosine(37) in tRNA + 2 reduced [2Fe-2S]-[ferredoxin] + 2 S-adenosyl-L-methionine = 2-methyladenosine(37) in tRNA + 5'-deoxyadenosine + L-methionine + 2 oxidized [2Fe-2S]-[ferredoxin] + S-adenosyl-L-homocysteine. Functionally, specifically methylates position 2 of adenine 2503 in 23S rRNA and position 2 of adenine 37 in tRNAs. m2A2503 modification seems to play a crucial role in the proofreading step occurring at the peptidyl transferase center and thus would serve to optimize ribosomal fidelity. The protein is Dual-specificity RNA methyltransferase RlmN of Shewanella baltica (strain OS155 / ATCC BAA-1091).